Consider the following 493-residue polypeptide: Glutamate--tRNA ligase (493 aa).

A 'HIGH' region motif is present at residues 10–20 (PSPTGDPHVGT). Residues 251-255 (KLSKR) carry the 'KMSKS' region motif. Lysine 254 contacts ATP.

The protein belongs to the class-I aminoacyl-tRNA synthetase family. Glutamate--tRNA ligase type 1 subfamily. In terms of assembly, monomer.

It localises to the cytoplasm. The enzyme catalyses tRNA(Glu) + L-glutamate + ATP = L-glutamyl-tRNA(Glu) + AMP + diphosphate. Catalyzes the attachment of glutamate to tRNA(Glu) in a two-step reaction: glutamate is first activated by ATP to form Glu-AMP and then transferred to the acceptor end of tRNA(Glu). In Pseudomonas putida (strain ATCC 700007 / DSM 6899 / JCM 31910 / BCRC 17059 / LMG 24140 / F1), this protein is Glutamate--tRNA ligase.